A 136-amino-acid polypeptide reads, in one-letter code: Large ribosomal subunit protein uL16c (136 aa).

The protein belongs to the universal ribosomal protein uL16 family. Part of the 50S ribosomal subunit.

The protein localises to the plastid. It is found in the chloroplast. The protein is Large ribosomal subunit protein uL16c of Mesostigma viride (Green alga).